We begin with the raw amino-acid sequence, 86 residues long: uncharacterized protein (86 aa).

Residues 12 to 32 traverse the membrane as a helical segment; sequence IIFIFAIIIIVVLCVITYLYL.

The protein resides in the membrane. This is an uncharacterized protein from Escherichia coli (strain K12).